Here is a 417-residue protein sequence, read N- to C-terminus: NADH-quinone oxidoreductase subunit D (417 aa).

It belongs to the complex I 49 kDa subunit family. As to quaternary structure, NDH-1 is composed of 14 different subunits. Subunits NuoB, C, D, E, F, and G constitute the peripheral sector of the complex.

It localises to the cell inner membrane. It carries out the reaction a quinone + NADH + 5 H(+)(in) = a quinol + NAD(+) + 4 H(+)(out). Functionally, NDH-1 shuttles electrons from NADH, via FMN and iron-sulfur (Fe-S) centers, to quinones in the respiratory chain. The immediate electron acceptor for the enzyme in this species is believed to be ubiquinone. Couples the redox reaction to proton translocation (for every two electrons transferred, four hydrogen ions are translocated across the cytoplasmic membrane), and thus conserves the redox energy in a proton gradient. The polypeptide is NADH-quinone oxidoreductase subunit D (Acidithiobacillus ferrooxidans (strain ATCC 53993 / BNL-5-31) (Leptospirillum ferrooxidans (ATCC 53993))).